Here is a 512-residue protein sequence, read N- to C-terminus: Maturase K (512 aa).

This sequence belongs to the intron maturase 2 family. MatK subfamily.

It localises to the plastid. It is found in the chloroplast. Usually encoded in the trnK tRNA gene intron. Probably assists in splicing its own and other chloroplast group II introns. The protein is Maturase K of Ginkgo biloba (Ginkgo).